A 683-amino-acid polypeptide reads, in one-letter code: Solute carrier organic anion transporter family member 2B1 (683 aa).

The interval 1–30 is disordered; it reads MPDRSTKTTMGTEDMHERKVSVEPQDSHQD. Over 1–41 the chain is Cytoplasmic; it reads MPDRSTKTTMGTEDMHERKVSVEPQDSHQDAQPRGMFHNIK. Positions 13–30 are enriched in basic and acidic residues; sequence EDMHERKVSVEPQDSHQD. Serine 21 is modified (phosphoserine). The helical transmembrane segment at 42–61 threads the bilayer; sequence FFVLCHSLLQLTQLMISGYL. The Extracellular segment spans residues 62–80; sequence KSSISTVEKRFGLSSQISG. Residues 81–101 form a helical membrane-spanning segment; that stretch reads LLAAFNEVGNVSLILFVSYFG. The Cytoplasmic portion of the chain corresponds to 102-107; it reads SRVHRP. The helical transmembrane segment at 108-132 threads the bilayer; it reads RMIGYGALLVATAGLLMALPHFISE. The Extracellular segment spans residues 133–177; that stretch reads PYRYDHSSSDNRSLDFEASLCLPTTMAPASALSNGSCSSHTETKH. Asparagine 143 and asparagine 166 each carry an N-linked (GlcNAc...) asparagine glycan. A helical membrane pass occupies residues 178–207; that stretch reads LTMVGIMFAAQTLLGIGGVPIQPFGISYID. The Cytoplasmic segment spans residues 208-226; it reads DFAHHSNSPLYIGILFGIT. The chain crosses the membrane as a helical span at residues 227–247; that stretch reads TMGPGLAYGLGSLMLRLYVDI. Residues 248–265 are Extracellular-facing; sequence DRMPEGGINLTPKDPRWV. Residues 266–290 form a helical membrane-spanning segment; the sequence is GAWWLGFLISSGLVVLASSPYFFFP. Residues 291 to 355 lie on the Cytoplasmic side of the membrane; the sequence is REMPKEKHEF…VKVFPRVLLR (65 aa). Phosphoserine occurs at positions 312 and 315. The helical transmembrane segment at 356–377 threads the bilayer; it reads NLRHPIFLLVVLSQVCTSSMVA. Residues 378–397 lie on the Extracellular side of the membrane; sequence GMATFLPKFLERQFSITASF. The helical transmembrane segment at 398–421 threads the bilayer; sequence ANMLLGCLTIPLVIVGIMMGGVLV. At 422–425 the chain is on the cytoplasmic side; sequence KRLH. Residues 426–449 form a helical membrane-spanning segment; that stretch reads LSPVQCSALCLLGSLLCLLFSVPL. Residues 450-553 are Extracellular-facing; that stretch reads FFIGCSTHQI…SACSRLVLPF (104 aa). The region spanning 472 to 532 is the Kazal-like domain; the sequence is PSLFPGCSEP…VFYTNCSCVA (61 aa). Intrachain disulfides connect cysteine 478/cysteine 509, cysteine 484/cysteine 505, and cysteine 493/cysteine 530. Residues asparagine 527 and asparagine 534 are each glycosylated (N-linked (GlcNAc...) asparagine). The chain crosses the membrane as a helical span at residues 554 to 576; that stretch reads IVLFSLGAGLASITHTPSFMLIL. Over 577-585 the chain is Cytoplasmic; it reads RGVKKEDKT. Residues 586 to 611 traverse the membrane as a helical segment; the sequence is LAVGMQFMLLRVLAWMPSPVIHGSAI. Over 612–644 the chain is Extracellular; it reads DTTCVHWALTCGRRAVCRYYDHDLLRNRFIGLQ. Residues 645–662 form a helical membrane-spanning segment; the sequence is FFFKSGSLVCFTLVLAIL. Residues 663–683 lie on the Cytoplasmic side of the membrane; it reads RQQSREASTRTTVKSSELQQL.

It belongs to the organo anion transporter (TC 2.A.60) family. In terms of tissue distribution, expressed in liver, kidney, small intestine mucosa, large intestine, brain, lung, spleen, stomach and heart.

It localises to the cell membrane. The protein localises to the basal cell membrane. It is found in the apical cell membrane. It carries out the reaction dehydroepiandrosterone 3-sulfate(out) = dehydroepiandrosterone 3-sulfate(in). The catalysed reaction is estrone 3-sulfate(out) = estrone 3-sulfate(in). The enzyme catalyses estrone 3-sulfate(out) + hydrogencarbonate(in) = estrone 3-sulfate(in) + hydrogencarbonate(out). It catalyses the reaction taurocholate(out) = taurocholate(in). It carries out the reaction coproporphyrin III(out) = coproporphyrin III(in). The catalysed reaction is substance P(out) = substance P(in). The enzyme catalyses pregnenolone sulfate(out) = pregnenolone sulfate(in). It catalyses the reaction prostaglandin E2(out) = prostaglandin E2(in). It carries out the reaction prostaglandin D2(out) = prostaglandin D2(in). The catalysed reaction is L-thyroxine(out) = L-thyroxine(in). In terms of biological role, mediates the Na(+)-independent transport of steroid sulfate conjugates such as estrone 3-sulfate (E1S), dehydroepiandrosterone sulfate (DHEA-S) and pregnenolone sulfate (PregS) and other specific organic anions. Responsible for the transport of E1S through the basal membrane of syncytiotrophoblast, highlighting a potential role in the placental absorption of fetal-derived sulfated steroids including DHEA-S. Also facilitates the uptake of sulfated steroids at the basal/sinusoidal membrane of hepatocytes, therefore accounting for the major part of organic anions clearance of liver. Mediates the intestinal uptake of sulfated steroids. Mediates the uptake of the neurosteroids DHEA-S and PregS into the endothelial cells of the blood-brain barrier as the first step to enter the brain. Also plays a role in the reuptake of neuropeptides such as substance P/TAC1 and vasoactive intestinal peptide/VIP released from retinal neurons. May act as a heme transporter that promotes cellular iron availability. Also transports heme by-product coproporphyrin III (CPIII), and may be involved in their hepatic disposition. Mediates the uptake of other substrates such as prostaglandins D2 (PGD2), E1 (PGE1) and E2 (PGE2), taurocholate, L-thyroxine, leukotriene C4 and thromboxane B2. May contribute to regulate the transport of organic compounds in testis across the blood-testis-barrier. Shows a pH-sensitive substrate specificity which may be ascribed to the protonation state of the binding site and leads to a stimulation of substrate transport in an acidic microenvironment. The exact transport mechanism has not been yet deciphered but most likely involves an anion exchange, coupling the cellular uptake of organic substrate with the efflux of an anionic compound. Hydrogencarbonate/HCO3(-) acts as a probable counteranion that exchanges for organic anions. Cytoplasmic glutamate may also act as counteranion in the placenta. An inwardly directed proton gradient has also been proposed as the driving force of E1S uptake with a (H(+):E1S) stoichiometry of (1:1). This Mus musculus (Mouse) protein is Solute carrier organic anion transporter family member 2B1.